The following is a 291-amino-acid chain: HTH-type transcriptional regulator DgcR (291 aa).

The region spanning 1 to 58 (MRLRHIEVFHAIYTTGSITNAAKALHVSQPSVSKVLSHAEMQLGFKLFERVKGRLIPT) is the HTH lysR-type domain. Residues 18-37 (ITNAAKALHVSQPSVSKVLS) constitute a DNA-binding region (H-T-H motif).

It belongs to the LysR transcriptional regulatory family.

Functionally, transcriptional regulator that positively regulates the expression of the D-Glu gene cluster (DGC). The cluster includes dgcN and dgcA, which are involved in a deamination-independent D-glutamate degradation pathway, dgcR itself, dgcT, dgcP and dgcH. Acts by binding the consensus sequence upstream of dgcR, dgcT, dgcP and dgcH. This chain is HTH-type transcriptional regulator DgcR, found in Pseudoalteromonas sp.